The sequence spans 349 residues: ATPase GET3 (349 aa).

26–33 (KGGVGKTT) provides a ligand contact to ATP. Residue D57 is part of the active site. Positions 242 and 269 each coordinate ATP. C281 and C284 together coordinate Zn(2+).

It belongs to the arsA ATPase family. As to quaternary structure, homodimer. Component of the Golgi to ER traffic (GET) complex, which is composed of GET1, GET2 and GET3. Within the complex, GET1 and GET2 form a heterotetramer which is stabilized by phosphatidylinositol binding and which binds to the GET3 homodimer. Interacts with the chloride channel protein GEF1.

Its subcellular location is the cytoplasm. The protein localises to the endoplasmic reticulum. The protein resides in the golgi apparatus. In terms of biological role, ATPase required for the post-translational delivery of tail-anchored (TA) proteins to the endoplasmic reticulum. Recognizes and selectively binds the transmembrane domain of TA proteins in the cytosol. This complex then targets to the endoplasmic reticulum by membrane-bound receptors GET1 and GET2, where the tail-anchored protein is released for insertion. This process is regulated by ATP binding and hydrolysis. ATP binding drives the homodimer towards the closed dimer state, facilitating recognition of newly synthesized TA membrane proteins. ATP hydrolysis is required for insertion. Subsequently, the homodimer reverts towards the open dimer state, lowering its affinity for the GET1-GET2 receptor, and returning it to the cytosol to initiate a new round of targeting. Cooperates with the HDEL receptor ERD2 to mediate the ATP-dependent retrieval of resident ER proteins that contain a C-terminal H-D-E-L retention signal from the Golgi to the ER. Involved in low-level resistance to the oxyanions arsenite and arsenate, and in heat tolerance. This chain is ATPase GET3, found in Lodderomyces elongisporus (strain ATCC 11503 / CBS 2605 / JCM 1781 / NBRC 1676 / NRRL YB-4239) (Yeast).